We begin with the raw amino-acid sequence, 1353 residues long: Xanthine dehydrogenase (1353 aa).

The 88-residue stretch at 17–104 folds into the 2Fe-2S ferredoxin-type domain; it reads STLIFFVNGK…GSAVTTVEGI (88 aa). Positions 56, 61, 64, 86, 126, 129, 161, and 163 each coordinate [2Fe-2S] cluster. An FAD-binding PCMH-type domain is found at 245 to 434; the sequence is YKGERATWYR…VGLYFPKTLE (190 aa). Residues 273 to 280, Phe353, 363 to 367, Asp376, Leu424, and Lys442 contribute to the FAD site; these read LVVGNTEI and SLGGN. Mo-molybdopterin is bound by residues Gln790 and Phe821. Substrate contacts are provided by Glu825 and Arg903. Arg935 is a Mo-molybdopterin binding site. Phe937 lines the substrate pocket. Residue Ala1102 coordinates Mo-molybdopterin. Glu1285 functions as the Proton acceptor in the catalytic mechanism.

The protein belongs to the xanthine dehydrogenase family. As to quaternary structure, homodimer. Requires FAD as cofactor. It depends on Mo-molybdopterin as a cofactor. [2Fe-2S] cluster serves as cofactor.

It localises to the peroxisome. The enzyme catalyses xanthine + NAD(+) + H2O = urate + NADH + H(+). It carries out the reaction hypoxanthine + NAD(+) + H2O = xanthine + NADH + H(+). Its function is as follows. Key enzyme in purine degradation. Catalyzes the oxidation of hypoxanthine to xanthine. Catalyzes the oxidation of xanthine to uric acid. The protein is Xanthine dehydrogenase (XDH) of Calliphora vicina (Blue blowfly).